Consider the following 258-residue polypeptide: Type III pantothenate kinase (258 aa).

ATP is bound at residue Asp-6 to Val-13. Residues Tyr-100 and Gly-107–Arg-110 contribute to the substrate site. The Proton acceptor role is filled by Asp-109. Position 129 (Asp-129) interacts with K(+). Residue Thr-132 participates in ATP binding. Position 184 (Thr-184) interacts with substrate.

It belongs to the type III pantothenate kinase family. Homodimer. It depends on NH4(+) as a cofactor. The cofactor is K(+).

Its subcellular location is the cytoplasm. The enzyme catalyses (R)-pantothenate + ATP = (R)-4'-phosphopantothenate + ADP + H(+). It functions in the pathway cofactor biosynthesis; coenzyme A biosynthesis; CoA from (R)-pantothenate: step 1/5. Its function is as follows. Catalyzes the phosphorylation of pantothenate (Pan), the first step in CoA biosynthesis. This is Type III pantothenate kinase from Geobacillus thermodenitrificans (strain NG80-2).